The chain runs to 353 residues: UPF0283 membrane protein YcjF (353 aa).

3 helical membrane passes run 70–90 (MVMG…VQWT), 100–120 (VALG…GSVV), and 213–233 (ESTL…FIAW).

It belongs to the UPF0283 family.

Its subcellular location is the cell inner membrane. The protein is UPF0283 membrane protein YcjF of Escherichia coli O139:H28 (strain E24377A / ETEC).